A 462-amino-acid polypeptide reads, in one-letter code: Argininosuccinate lyase (462 aa).

This sequence belongs to the lyase 1 family. Argininosuccinate lyase subfamily.

It localises to the cytoplasm. It catalyses the reaction 2-(N(omega)-L-arginino)succinate = fumarate + L-arginine. It functions in the pathway amino-acid biosynthesis; L-arginine biosynthesis; L-arginine from L-ornithine and carbamoyl phosphate: step 3/3. This is Argininosuccinate lyase from Bacillus mycoides (strain KBAB4) (Bacillus weihenstephanensis).